Consider the following 574-residue polypeptide: Adenine deaminase (574 aa).

It belongs to the metallo-dependent hydrolases superfamily. Adenine deaminase family. It depends on Mn(2+) as a cofactor.

The catalysed reaction is adenine + H2O + H(+) = hypoxanthine + NH4(+). The protein is Adenine deaminase of Thermosipho melanesiensis (strain DSM 12029 / CIP 104789 / BI429).